The sequence spans 258 residues: MLTITAIPAFNDNYFWIVRQADSNFAYVVDPGVAQPVIDYILAHDLILAGVLITHKHADHVGGIQGLQDFYQNSLPVYGPKAEGIAGITHEIIDERTLCLPHLEANVEIIPVPGHTLGHHAYLIEDAIFCGDTLFSVGCGRIFEGSAAQMLASLTKLASLPAHCKIYCAHEYTQSNINFALTVTPNNPNLLQYASWVAKARADNIPSLPSFLSTELAVNPFLRCHTYEVKTAVASQFNTEINDELQTFTLLRKWKDNF.

Zn(2+)-binding residues include H55, H57, D59, H60, H115, D132, and H170.

It belongs to the metallo-beta-lactamase superfamily. Glyoxalase II family. In terms of assembly, monomer. The cofactor is Zn(2+).

The catalysed reaction is an S-(2-hydroxyacyl)glutathione + H2O = a 2-hydroxy carboxylate + glutathione + H(+). The protein operates within secondary metabolite metabolism; methylglyoxal degradation; (R)-lactate from methylglyoxal: step 2/2. Functionally, thiolesterase that catalyzes the hydrolysis of S-D-lactoyl-glutathione to form glutathione and D-lactic acid. This Shewanella denitrificans (strain OS217 / ATCC BAA-1090 / DSM 15013) protein is Hydroxyacylglutathione hydrolase.